Consider the following 187-residue polypeptide: Reactive Intermediate Deaminase A, chloroplastic (187 aa).

The N-terminal 58 residues, 1–58, are a transit peptide targeting the chloroplast; sequence MTWSVFRSINTPTLDLSTALRSTRTPLVAAGVGCATFAGVSLFRMSSRSPPFASLSVS. Arg-165 is a binding site for substrate.

Belongs to the RutC family. In terms of tissue distribution, expressed in leaves, petiols, petals, carpels and shoot apex.

Its subcellular location is the plastid. The protein localises to the chloroplast. The enzyme catalyses 2-iminobutanoate + H2O = 2-oxobutanoate + NH4(+). It catalyses the reaction 2-iminopropanoate + H2O = pyruvate + NH4(+). It participates in amino-acid biosynthesis; L-isoleucine biosynthesis; 2-oxobutanoate from L-threonine. In terms of biological role, hydrolyzes the Ser-derived enamine/imine product of Thr dehydratase, protecting the plastidial branched-chain aminotransferase BCAT3 (AC Q9M401) from inactivation. Involved in Ile biosynthesis. The sequence is that of Reactive Intermediate Deaminase A, chloroplastic from Arabidopsis thaliana (Mouse-ear cress).